The sequence spans 257 residues: Phosphonates import ATP-binding protein PhnC (257 aa).

An ABC transporter domain is found at 4–248 (IEFKNVSKVY…IFSEIYGRTI (245 aa)). Residue 37–44 (GLSGAGKS) coordinates ATP.

It belongs to the ABC transporter superfamily. Phosphonates importer (TC 3.A.1.9.1) family. The complex is composed of two ATP-binding proteins (PhnC), two transmembrane proteins (PhnE) and a solute-binding protein (PhnD).

The protein localises to the cell membrane. It carries out the reaction phosphonate(out) + ATP + H2O = phosphonate(in) + ADP + phosphate + H(+). Part of the ABC transporter complex PhnCDE involved in phosphonates import. Responsible for energy coupling to the transport system. This chain is Phosphonates import ATP-binding protein PhnC, found in Staphylococcus aureus (strain bovine RF122 / ET3-1).